Reading from the N-terminus, the 398-residue chain is Vacuolar protease A (398 aa).

A signal peptide spans 1–18 (MKSTSLLTASVLLGSASA). Residues 19–70 (AVHKLKLNKVPLDEQLYTHNIDAHVRALGQKYMGIRPNVHQELLEENSLNDM) constitute a propeptide, activation peptide. A Peptidase A1 domain is found at 85 to 395 (YFSEISLGTP…DLGNNAVGLA (311 aa)). D103 is a catalytic residue. A disulfide bridge links C116 with C121. Residue N138 is glycosylated (N-linked (GlcNAc...) asparagine). D287 is an active-site residue. C321 and C354 are oxidised to a cystine. N338 carries an N-linked (GlcNAc...) asparagine glycan.

Belongs to the peptidase A1 family.

It localises to the vacuole lumen. The protein localises to the secreted. It catalyses the reaction Hydrolysis of proteins with broad specificity for peptide bonds. Cleaves -Leu-Leu-|-Val-Tyr- bond in a synthetic substrate. Does not act on esters of Tyr or Arg.. Its function is as follows. Vacuolar aspartic endopeptidase which is probably also secreted and contributes to virulence. This is Vacuolar protease A (pep2) from Aspergillus fumigatus (strain ATCC MYA-4609 / CBS 101355 / FGSC A1100 / Af293) (Neosartorya fumigata).